The following is a 509-amino-acid chain: Sensor histidine kinase TrcS (509 aa).

2 helical membrane-spanning segments follow: residues 24–44 (LLLG…VVSV) and 188–208 (VALV…VVGY). The region spanning 207-269 (GYALRPLRRV…LLDNVDGALA (63 aa)) is the HAMP domain. Residues 284-502 (DASHELRTPL…VFRVRLPMIE (219 aa)) form the Histidine kinase domain. At His287 the chain carries Phosphohistidine; by autocatalysis.

It depends on a divalent metal cation as a cofactor. Autophosphorylated.

It is found in the cell membrane. The enzyme catalyses ATP + protein L-histidine = ADP + protein N-phospho-L-histidine.. In terms of biological role, member of the two-component regulatory system TrcS/TrcR. Phosphorylates TrcR. The TrcR-TrcS regulatory system may act as a transition regulatory system involved in adapting to an intracellular environment and transitioning from latency to reactivation. This Mycobacterium tuberculosis (strain ATCC 25618 / H37Rv) protein is Sensor histidine kinase TrcS.